The primary structure comprises 194 residues: Putative manganese efflux pump MntP (194 aa).

The next 6 membrane-spanning stretches (helical) occupy residues 3-23 (FYATIILALALSMDAFAVAVC), 40-60 (GFIFGIIEASTPIIGWALGLY), 65-85 (IIQWDHWVAFGLLVILGGRMI), 109-129 (LIATGIATSLDAMAIGVGLAF), 134-154 (IVHTAMTIGMMTMIMATLGML), and 169-189 (IIGGMVLIAIGFNILFEHLDL).

This sequence belongs to the MntP (TC 9.B.29) family.

The protein resides in the cell inner membrane. Functionally, probably functions as a manganese efflux pump. The sequence is that of Putative manganese efflux pump MntP from Proteus mirabilis (strain HI4320).